The following is a 175-amino-acid chain: Protein FAM89A (175 aa).

The disordered stretch occupies residues 141–175; the sequence is FQEQGSLQDGQHHGSPRDQSPLTHLSSSDWILESI. A compositionally biased stretch (polar residues) spans 157–169; the sequence is RDQSPLTHLSSSD.

The protein belongs to the FAM89 family.

The chain is Protein FAM89A (Fam89a) from Mus musculus (Mouse).